The following is a 429-amino-acid chain: Histidine--tRNA ligase (429 aa).

Belongs to the class-II aminoacyl-tRNA synthetase family. Homodimer.

It localises to the cytoplasm. It carries out the reaction tRNA(His) + L-histidine + ATP = L-histidyl-tRNA(His) + AMP + diphosphate + H(+). The protein is Histidine--tRNA ligase of Cyanothece sp. (strain PCC 7425 / ATCC 29141).